A 207-amino-acid chain; its full sequence is Outer-membrane lipoprotein LolB (207 aa).

The first 21 residues, 1 to 21, serve as a signal peptide directing secretion; it reads MTLPDFRLIRLLPLASLVLTA. Cys22 is lipidated: N-palmitoyl cysteine. A lipid anchor (S-diacylglycerol cysteine) is attached at Cys22.

It belongs to the LolB family. Monomer.

Its subcellular location is the cell outer membrane. Its function is as follows. Plays a critical role in the incorporation of lipoproteins in the outer membrane after they are released by the LolA protein. This is Outer-membrane lipoprotein LolB from Salmonella typhi.